The chain runs to 554 residues: 3-(3-hydroxy-phenyl)propionate/3-hydroxycinnamic acid hydroxylase (554 aa).

FAD contacts are provided by residues 17–46 (QVAI…VVEK) and 285–295 (FRIDRVLLAGD).

This sequence belongs to the PheA/TfdB FAD monooxygenase family. It depends on FAD as a cofactor.

The enzyme catalyses 3-(3-hydroxyphenyl)propanoate + NADH + O2 + H(+) = 3-(2,3-dihydroxyphenyl)propanoate + NAD(+) + H2O. It catalyses the reaction (2E)-3-(3-hydroxyphenyl)prop-2-enoate + NADH + O2 + H(+) = (2E)-3-(2,3-dihydroxyphenyl)prop-2-enoate + NAD(+) + H2O. Its pathway is aromatic compound metabolism; 3-phenylpropanoate degradation. Its function is as follows. Catalyzes the insertion of one atom of molecular oxygen into position 2 of the phenyl ring of 3-(3-hydroxyphenyl)propionate (3-HPP) and hydroxycinnamic acid (3HCI). The chain is 3-(3-hydroxy-phenyl)propionate/3-hydroxycinnamic acid hydroxylase from Escherichia coli O8 (strain IAI1).